The chain runs to 163 residues: Nucleotide-binding protein SYNPCC7002_A1983 (163 aa).

It belongs to the YajQ family.

Its function is as follows. Nucleotide-binding protein. In Picosynechococcus sp. (strain ATCC 27264 / PCC 7002 / PR-6) (Agmenellum quadruplicatum), this protein is Nucleotide-binding protein SYNPCC7002_A1983.